A 131-amino-acid chain; its full sequence is Single-stranded DNA-binding protein 2 (131 aa).

One can recognise an SSB domain in the interval 1–103 (MYNKVIMIGR…VLASSFQLLE (103 aa)). The Important for interaction with partner proteins signature appears at 126 to 131 (EEELPF).

Homotetramer.

Its function is as follows. Plays an important role in DNA replication, recombination and repair. Binds to ssDNA and to an array of partner proteins to recruit them to their sites of action during DNA metabolism. The chain is Single-stranded DNA-binding protein 2 (ssb2) from Streptococcus agalactiae serotype V (strain ATCC BAA-611 / 2603 V/R).